A 429-amino-acid polypeptide reads, in one-letter code: Serine hydroxymethyltransferase (429 aa).

Residues L125 and G129–L131 contribute to the (6S)-5,6,7,8-tetrahydrofolate site. K234 bears the N6-(pyridoxal phosphate)lysine mark.

It belongs to the SHMT family. Homodimer. The cofactor is pyridoxal 5'-phosphate.

It is found in the cytoplasm. The enzyme catalyses (6R)-5,10-methylene-5,6,7,8-tetrahydrofolate + glycine + H2O = (6S)-5,6,7,8-tetrahydrofolate + L-serine. The protein operates within one-carbon metabolism; tetrahydrofolate interconversion. It participates in amino-acid biosynthesis; glycine biosynthesis; glycine from L-serine: step 1/1. In terms of biological role, catalyzes the reversible interconversion of serine and glycine with tetrahydrofolate (THF) serving as the one-carbon carrier. This reaction serves as the major source of one-carbon groups required for the biosynthesis of purines, thymidylate, methionine, and other important biomolecules. Also exhibits THF-independent aldolase activity toward beta-hydroxyamino acids, producing glycine and aldehydes, via a retro-aldol mechanism. This chain is Serine hydroxymethyltransferase, found in Allorhizobium ampelinum (strain ATCC BAA-846 / DSM 112012 / S4) (Agrobacterium vitis (strain S4)).